The sequence spans 297 residues: MAPSQLPPIFNPTPQDIEMLLAAQCHLGSKNLQVHMEPYLWKTRPDGVNVINIGKTWEKILLAARIIAAIENPADICVISARPYGQRAVLKFASHTGATAIAGRFTPGNFTNYITRSFKEPRLIIVTDPRTDAQAIKEASYVNIPVIALCDTDSPTEFVDVAIPTNNKGRHAIGLIWWLLAREVLRLRGTLATRETEWDVVVDLYFYRDPEAEENKEIADEAKVPGAEEIGAGAVESGFAGENWDTQAPGAGVPGTAFSAATAAPTSWEADGGDWAASSAAPAGESWAETQPAEAKW.

Residues 252–297 (GVPGTAFSAATAAPTSWEADGGDWAASSAAPAGESWAETQPAEAKW) form a disordered region. Residues 256–289 (TAFSAATAAPTSWEADGGDWAASSAAPAGESWAE) show a composition bias toward low complexity.

Belongs to the universal ribosomal protein uS2 family. As to quaternary structure, component of the small ribosomal subunit. Mature ribosomes consist of a small (40S) and a large (60S) subunit. The 40S subunit contains about 33 different proteins and 1 molecule of RNA (18S). The 60S subunit contains about 49 different proteins and 3 molecules of RNA (25S, 5.8S and 5S). Interacts with rps21.

It is found in the cytoplasm. In terms of biological role, required for the assembly and/or stability of the 40S ribosomal subunit. Required for the processing of the 20S rRNA-precursor to mature 18S rRNA in a late step of the maturation of 40S ribosomal subunits. The protein is Small ribosomal subunit protein uS2 (rps0) of Aspergillus fumigatus (strain CBS 144.89 / FGSC A1163 / CEA10) (Neosartorya fumigata).